The sequence spans 245 residues: DNA repair protein RecO (245 aa).

Belongs to the RecO family.

In terms of biological role, involved in DNA repair and RecF pathway recombination. This chain is DNA repair protein RecO, found in Klebsiella pneumoniae (strain 342).